Reading from the N-terminus, the 303-residue chain is MENITNNSERSLDRPKRQRPVSMENVGGTASGSEVARSATLLELDLLDCPICYHKLGAPIYQCDNGHIACSSCCKKVKYKCPYCSLRIGFFRSRILEKIVEAVVVSCPNAKYGCTEKIPYDNESESAHERVCEFTLCYCPEPECKYTGVYTDLYRHYHAEHKTDHSWFKCGEYNNAWLHVTGEKLSFLVLQEYEDGPLVVVQCSMESHGICVTVNCIAPCAPGVGEFSCHLIYRNGSEKITFESKKMNKIQKVSPENHVANYKPIPYYLRGEASNFMSIPYYLLDEASILKMQICIRRSGEEV.

A disordered region spans residues 1–30 (MENITNNSERSLDRPKRQRPVSMENVGGTA). The RING-type zinc-finger motif lies at 49-85 (CPICYHKLGAPIYQCDNGHIACSSCCKKVKYKCPYCS). The SBD stretch occupies residues 99–286 (IVEAVVVSCP…MSIPYYLLDE (188 aa)). The SIAH-type zinc finger occupies 102–162 (AVVVSCPNAK…LYRHYHAEHK (61 aa)). Zn(2+) contacts are provided by cysteine 107, cysteine 114, histidine 128, cysteine 132, cysteine 139, cysteine 144, histidine 156, and histidine 161.

It belongs to the SINA (Seven in absentia) family.

It carries out the reaction S-ubiquitinyl-[E2 ubiquitin-conjugating enzyme]-L-cysteine + [acceptor protein]-L-lysine = [E2 ubiquitin-conjugating enzyme]-L-cysteine + N(6)-ubiquitinyl-[acceptor protein]-L-lysine.. Its pathway is protein modification; protein ubiquitination. E3 ubiquitin-protein ligase that mediates ubiquitination and subsequent proteasomal degradation of target proteins. E3 ubiquitin ligases accept ubiquitin from an E2 ubiquitin-conjugating enzyme in the form of a thioester and then directly transfers the ubiquitin to targeted substrates. It probably triggers the ubiquitin-mediated degradation of different substrates. In Arabidopsis thaliana (Mouse-ear cress), this protein is E3 ubiquitin-protein ligase SINA-like 3.